Reading from the N-terminus, the 514-residue chain is Serine--tRNA ligase, cytoplasmic (514 aa).

At Met-1 the chain carries N-acetylmethionine. An interaction with tRNA region spans residues 9–61 (RVDKGGDPALIRESQEKRFKDPGLVDQLVKADSEWRRCRFRADNLNKLKNLCS). Ser-241 bears the Phosphoserine mark. Residues Thr-271 and Arg-302 each coordinate L-serine. Residues 302-304 (RQE) and 318-321 (VHQF) each bind ATP. The residue at position 323 (Lys-323) is an N6-acetyllysine. Glu-325 provides a ligand contact to L-serine. 391–394 (ELVS) contacts ATP. Asn-427 contributes to the L-serine binding site. The tract at residues 475–514 (PIDQEPSKKQKKQHEGSKKKGAARDVALESQLQNMEVTDA) is disordered. Basic and acidic residues predominate over residues 479-501 (EPSKKQKKQHEGSKKKGAARDVA). Positions 482–494 (KKQKKQHEGSKKK) match the Nuclear localization signal motif. Residues 504–514 (SQLQNMEVTDA) are compositionally biased toward polar residues.

Belongs to the class-II aminoacyl-tRNA synthetase family. Type-1 seryl-tRNA synthetase subfamily. Homodimer. The tRNA molecule may bind across the dimer. Interacts with SIRT2. Interacts with METTL6; interaction is required for the tRNA N(3)-methylcytidine methyltransferase activity of METTL6.

The protein resides in the cytoplasm. It is found in the nucleus. It carries out the reaction tRNA(Ser) + L-serine + ATP = L-seryl-tRNA(Ser) + AMP + diphosphate + H(+). The catalysed reaction is tRNA(Sec) + L-serine + ATP = L-seryl-tRNA(Sec) + AMP + diphosphate + H(+). It functions in the pathway aminoacyl-tRNA biosynthesis; selenocysteinyl-tRNA(Sec) biosynthesis; L-seryl-tRNA(Sec) from L-serine and tRNA(Sec): step 1/1. Its function is as follows. Catalyzes the attachment of serine to tRNA(Ser) in a two-step reaction: serine is first activated by ATP to form Ser-AMP and then transferred to the acceptor end of tRNA(Ser). Is probably also able to aminoacylate tRNA(Sec) with serine, to form the misacylated tRNA L-seryl-tRNA(Sec), which will be further converted into selenocysteinyl-tRNA(Sec). In the nucleus, binds to the VEGFA core promoter and prevents MYC binding and transcriptional activation by MYC. Recruits SIRT2 to the VEGFA promoter, promoting deacetylation of histone H4 at 'Lys-16' (H4K16). Thereby, inhibits the production of VEGFA and sprouting angiogenesis mediated by VEGFA. The sequence is that of Serine--tRNA ligase, cytoplasmic (SARS1) from Bos taurus (Bovine).